The chain runs to 665 residues: DNA ligase (665 aa).

NAD(+)-binding positions include 32-36 (DSEYD), 81-82 (SL), and glutamate 110. Catalysis depends on lysine 112, which acts as the N6-AMP-lysine intermediate. Residues arginine 133, glutamate 167, lysine 283, and lysine 307 each contribute to the NAD(+) site. Cysteine 401, cysteine 404, cysteine 419, and cysteine 424 together coordinate Zn(2+). Residues 586 to 665 (EGHPDFSGKT…AAFIEKQNGI (80 aa)) enclose the BRCT domain.

This sequence belongs to the NAD-dependent DNA ligase family. LigA subfamily. The cofactor is Mg(2+). Requires Mn(2+) as cofactor.

The enzyme catalyses NAD(+) + (deoxyribonucleotide)n-3'-hydroxyl + 5'-phospho-(deoxyribonucleotide)m = (deoxyribonucleotide)n+m + AMP + beta-nicotinamide D-nucleotide.. In terms of biological role, DNA ligase that catalyzes the formation of phosphodiester linkages between 5'-phosphoryl and 3'-hydroxyl groups in double-stranded DNA using NAD as a coenzyme and as the energy source for the reaction. It is essential for DNA replication and repair of damaged DNA. This is DNA ligase from Staphylococcus epidermidis (strain ATCC 35984 / DSM 28319 / BCRC 17069 / CCUG 31568 / BM 3577 / RP62A).